We begin with the raw amino-acid sequence, 118 residues long: Large ribosomal subunit protein bL17 (118 aa).

Belongs to the bacterial ribosomal protein bL17 family. Part of the 50S ribosomal subunit. Contacts protein L32.

The sequence is that of Large ribosomal subunit protein bL17 from Phytoplasma australiense.